The chain runs to 190 residues: MAGLMGKYAAFLTRRPVLGNMISSAVLFGTGDVIAQQLIEKKGADHDLPRTARIVTWGGILFAPTVNLWFRTLERIPIRSRWPATFARVGLDQFGFAPVILSGFFTAMTFMEGKDFNAAKVKWHESFFPTLQANWMLFIPFQILNMGLVPLQYRLLAVNAVNIPWNAFLSLQNAKGRKAEEDPVAISKKE.

4 consecutive transmembrane segments (helical) span residues Pro16–Gln36, Ile54–Glu74, Leu91–Met111, and Leu131–Leu151.

This sequence belongs to the peroxisomal membrane protein PXMP2/4 family.

It is found in the mitochondrion inner membrane. In terms of biological role, may be involved in cellular response to stress. Required to maintain mitochondrial DNA (mtDNA) integrity and stability. This chain is Protein SYM1 (SYM1), found in Cryptococcus neoformans var. neoformans serotype D (strain B-3501A) (Filobasidiella neoformans).